The primary structure comprises 921 residues: Bifunctional aspartokinase/homoserine dehydrogenase, chloroplastic (921 aa).

A chloroplast-targeting transit peptide spans 1 to 87 (SLSSAISPSS…DDSVEKVHLP (87 aa)). Residues 88 to 339 (RGAMWSIHKF…VSEAVVLKTL (252 aa)) are aspartokinase. The interface stretch occupies residues 340 to 567 (SYQEAWEMSY…LSRTTIAVGI (228 aa)). ACT domains lie at 417-489 (VEGT…QVAN) and 498-575 (TVGQ…LIGA). The tract at residues 568–921 (VGPGLIGATL…RLASYLGAPS (354 aa)) is homoserine dehydrogenase. I573 contributes to the NAD(+) binding site. I573, R605, T654, and K678 together coordinate NADP(+). I573 provides a ligand contact to NADPH. T654 is an NAD(+) binding site. NADPH contacts are provided by T654 and K678. E705, V708, A710, and L712 together coordinate Na(+). The NADP(+) site is built by G763 and E766. Residues E766 and D777 each coordinate L-homoserine. The active-site Proton donor is K781. G898 contacts NAD(+). An NADP(+)-binding site is contributed by G898. G898 serves as a coordination point for NADPH.

The protein in the N-terminal section; belongs to the aspartokinase family. In the C-terminal section; belongs to the homoserine dehydrogenase family. A metal cation serves as cofactor.

Its subcellular location is the plastid. The protein resides in the chloroplast. The enzyme catalyses L-homoserine + NADP(+) = L-aspartate 4-semialdehyde + NADPH + H(+). It catalyses the reaction L-homoserine + NAD(+) = L-aspartate 4-semialdehyde + NADH + H(+). The catalysed reaction is L-aspartate + ATP = 4-phospho-L-aspartate + ADP. It functions in the pathway amino-acid biosynthesis; L-lysine biosynthesis via DAP pathway; (S)-tetrahydrodipicolinate from L-aspartate: step 1/4. It participates in amino-acid biosynthesis; L-methionine biosynthesis via de novo pathway; L-homoserine from L-aspartate: step 1/3. The protein operates within amino-acid biosynthesis; L-methionine biosynthesis via de novo pathway; L-homoserine from L-aspartate: step 3/3. Its pathway is amino-acid biosynthesis; L-threonine biosynthesis; L-threonine from L-aspartate: step 1/5. It functions in the pathway amino-acid biosynthesis; L-threonine biosynthesis; L-threonine from L-aspartate: step 3/5. Functionally, bifunctional aspartate kinase and homoserine dehydrogenase that catalyzes the first and the third steps toward the synthesis of lysine, methionine and threonine from aspartate. This is Bifunctional aspartokinase/homoserine dehydrogenase, chloroplastic from Daucus carota (Wild carrot).